Here is a 511-residue protein sequence, read N- to C-terminus: Protoheme IX farnesyltransferase, mitochondrial (511 aa).

The transit peptide at 1–23 (MSSSTESLPGTLRRTLTTSRAPA) directs the protein to the mitochondrion. Disordered stretches follow at residues 1–27 (MSSS…ATSS) and 50–136 (HDSA…LAPD). 3 stretches are compositionally biased toward low complexity: residues 52 to 79 (SASS…SSTT), 104 to 115 (RKAAAAAAAAAA), and 126 to 136 (PDAPTADLAPD). The next 8 helical transmembrane spans lie at 168-188 (LTVL…VPSF), 197-217 (SLAP…TTLC), 253-273 (AAVL…YFGV), 275-295 (PTVS…YTPL), 303-323 (TWVG…AAAG), 344-364 (LGGW…FMPL), 398-418 (AFIP…SFAV), and 444-464 (ARGL…LALA).

It belongs to the UbiA prenyltransferase family.

Its subcellular location is the mitochondrion membrane. Its function is as follows. Converts protoheme IX and farnesyl diphosphate to heme O. The chain is Protoheme IX farnesyltransferase, mitochondrial (pft-1) from Neurospora crassa (strain ATCC 24698 / 74-OR23-1A / CBS 708.71 / DSM 1257 / FGSC 987).